The following is a 180-amino-acid chain: ATP synthase subunit delta (180 aa).

The protein belongs to the ATPase delta chain family. As to quaternary structure, F-type ATPases have 2 components, F(1) - the catalytic core - and F(0) - the membrane proton channel. F(1) has five subunits: alpha(3), beta(3), gamma(1), delta(1), epsilon(1). CF(0) has four main subunits: a(1), b(1), b'(1) and c(10-14). The alpha and beta chains form an alternating ring which encloses part of the gamma chain. F(1) is attached to F(0) by a central stalk formed by the gamma and epsilon chains, while a peripheral stalk is formed by the delta, b and b' chains.

It localises to the cellular thylakoid membrane. F(1)F(0) ATP synthase produces ATP from ADP in the presence of a proton or sodium gradient. F-type ATPases consist of two structural domains, F(1) containing the extramembraneous catalytic core and F(0) containing the membrane proton channel, linked together by a central stalk and a peripheral stalk. During catalysis, ATP synthesis in the catalytic domain of F(1) is coupled via a rotary mechanism of the central stalk subunits to proton translocation. Its function is as follows. This protein is part of the stalk that links CF(0) to CF(1). It either transmits conformational changes from CF(0) to CF(1) or is implicated in proton conduction. The polypeptide is ATP synthase subunit delta (Prochlorococcus marinus (strain AS9601)).